We begin with the raw amino-acid sequence, 314 residues long: 2-methoxy-6-polyprenyl-1,4-benzoquinol methylase, mitochondrial (314 aa).

Residues M1 to R19 constitute a mitochondrion transit peptide. S-adenosyl-L-methionine is bound by residues T109, D154, N186–S187, and S203.

It belongs to the class I-like SAM-binding methyltransferase superfamily. MenG/UbiE family. As to quaternary structure, component of a multi-subunit COQ enzyme complex.

The protein localises to the mitochondrion inner membrane. The enzyme catalyses a 2-methoxy-6-(all-trans-polyprenyl)benzene-1,4-diol + S-adenosyl-L-methionine = a 5-methoxy-2-methyl-3-(all-trans-polyprenyl)benzene-1,4-diol + S-adenosyl-L-homocysteine + H(+). The protein operates within cofactor biosynthesis; ubiquinone biosynthesis. In terms of biological role, methyltransferase required for the conversion of 2-polyprenyl-6-methoxy-1,4-benzoquinol (DDMQH2) to 2-polyprenyl-3-methyl-6-methoxy-1,4-benzoquinol (DMQH2). The polypeptide is 2-methoxy-6-polyprenyl-1,4-benzoquinol methylase, mitochondrial (Dictyostelium discoideum (Social amoeba)).